A 148-amino-acid chain; its full sequence is Methylglyoxal synthase (148 aa).

The MGS-like domain maps to 4 to 148 (VSVPAIKRIV…LSYNTKVKKD (145 aa)). Substrate is bound by residues His17, Lys21, 43–46 (TGTT), and 63–64 (SG). Asp69 functions as the Proton donor/acceptor in the catalytic mechanism. A substrate-binding site is contributed by His96.

Belongs to the methylglyoxal synthase family.

It catalyses the reaction dihydroxyacetone phosphate = methylglyoxal + phosphate. Catalyzes the formation of methylglyoxal from dihydroxyacetone phosphate. The chain is Methylglyoxal synthase from Leptospira interrogans serogroup Icterohaemorrhagiae serovar copenhageni (strain Fiocruz L1-130).